Reading from the N-terminus, the 245-residue chain is tRNA (guanine-N(1)-)-methyltransferase (245 aa).

S-adenosyl-L-methionine contacts are provided by residues G111 and 131–136 (IGDYVL).

It belongs to the RNA methyltransferase TrmD family. In terms of assembly, homodimer.

It localises to the cytoplasm. It carries out the reaction guanosine(37) in tRNA + S-adenosyl-L-methionine = N(1)-methylguanosine(37) in tRNA + S-adenosyl-L-homocysteine + H(+). Its function is as follows. Specifically methylates guanosine-37 in various tRNAs. In Staphylococcus haemolyticus (strain JCSC1435), this protein is tRNA (guanine-N(1)-)-methyltransferase.